Here is a 714-residue protein sequence, read N- to C-terminus: Polyribonucleotide nucleotidyltransferase (714 aa).

2 residues coordinate Mg(2+): D496 and D502. The KH domain maps to P562–I621. Residues G631–L699 form the S1 motif domain.

The protein belongs to the polyribonucleotide nucleotidyltransferase family. Requires Mg(2+) as cofactor.

It localises to the cytoplasm. It catalyses the reaction RNA(n+1) + phosphate = RNA(n) + a ribonucleoside 5'-diphosphate. Involved in mRNA degradation. Catalyzes the phosphorolysis of single-stranded polyribonucleotides processively in the 3'- to 5'-direction. This is Polyribonucleotide nucleotidyltransferase from Picosynechococcus sp. (strain ATCC 27264 / PCC 7002 / PR-6) (Agmenellum quadruplicatum).